Here is a 162-residue protein sequence, read N- to C-terminus: NADH-ubiquinone oxidoreductase subunit 8 (162 aa).

2 4Fe-4S ferredoxin-type domains span residues 54-83 (RRYQ…IESE) and 93-122 (TRYD…EGPN). Residues cysteine 63, cysteine 66, cysteine 69, cysteine 73, cysteine 102, cysteine 105, cysteine 108, and cysteine 112 each coordinate [4Fe-4S] cluster.

It belongs to the complex I 23 kDa subunit family. [4Fe-4S] cluster is required as a cofactor.

The protein resides in the mitochondrion. It catalyses the reaction a ubiquinone + NADH + 5 H(+)(in) = a ubiquinol + NAD(+) + 4 H(+)(out). Functionally, core subunit of the mitochondrial membrane respiratory chain NADH dehydrogenase (Complex I) that is believed to belong to the minimal assembly required for catalysis. Complex I functions in the transfer of electrons from NADH to the respiratory chain. The immediate electron acceptor for the enzyme is believed to be ubiquinone. May donate electrons to ubiquinone. The protein is NADH-ubiquinone oxidoreductase subunit 8 (NAD8) of Reclinomonas americana.